Reading from the N-terminus, the 193-residue chain is MTEYLLLLIGTVLVNNFVLVKFLGLCPFMGVSKKLESAIGMGLATTFVLTLASVCSYLVETYILSPLGIEYLRTMSFILVIAVVVQFTEMVVHKTSPTLYRVLGIFLPLITTNCAVLGVALLNVTENHNFVESIIYGFGAAVGFSLVLILFSAMRERIAAADVPLPFKGASIAMITAGLMSLAFMGFTGLVKL.

6 consecutive transmembrane segments (helical) span residues 5 to 25 (LLLL…FLGL), 39 to 59 (IGMG…SYLV), 67 to 87 (LGIE…VVQF), 102 to 122 (VLGI…VALL), 134 to 154 (IIYG…FSAM), and 171 to 191 (SIAM…TGLV).

Belongs to the NqrDE/RnfAE family. In terms of assembly, the complex is composed of six subunits: RnfA, RnfB, RnfC, RnfD, RnfE and RnfG.

It localises to the cell inner membrane. In terms of biological role, part of a membrane-bound complex that couples electron transfer with translocation of ions across the membrane. This is Ion-translocating oxidoreductase complex subunit A from Aliivibrio fischeri (strain ATCC 700601 / ES114) (Vibrio fischeri).